The primary structure comprises 2038 residues: MSSSEPPPRYEPPVEPVNGIVQPPVIPPAERPGRNTNQLQYLIKTVMKVIWKHHFSWPFQQPVDAKKLNLPDYHKIIKQPMDMGTIKKRLENNYYWSAKETIQDFNTMFNNCYVYNKPGEDVVVMAQTLEKVFLQKIESMPKEELELEPVTAKGGKKKQRAPATPKSSSGGAGASTGSGTSSAAVTSGPGSGSTKVSVAASSAQQSGLQGATGAGGGSSSTPGTQPGSGAGGAIAARPVSAMGGTVSSTAGGAPSIPPISTMPPHTVPGSTNTTTTAMAGGVGGPGAAGANPNAAALMASLLNAGQTGAYPGAPGQTAVNSSSLLDGSTAAVAAAAAAAAAAAAAAGGAAGAAGGAGTIPAVAVNAANAVQAYVNAGVSVGVDAVIPPQQPAKIKKGVKRKADTTTPTANAFESPYTQMDSKSAKIATRRESNRQDLTFQGSGYNMSPLGVSGVPGLGGLVAGGVAGVAVAKNKEKLSDALKSCNEILKELFSKKHSGYAWPFYKPVDAEMLGLHDYHDIIKKPMDLGTVKRKMDNREYKSAPEFAADVRLIFTNCYKYNPPDHDVVAMGRKLQDVFEMRYANIPDEPVANAAHHHGHGHGHGHGHGHGHGHGHGHGHGHGYGGSSSLKHDASDSSSEDSSDTENESNSDEERSARLKMLESKLLGLQEEIRKLSEEASAKKKAKKKLKEKKKSIGGGSGSGSASHHCHATGGGANAGGAGGPGSGGHGSVSVPGGVGSLGPGGAGGANLNALLGGSLVGHGGAAVAGGVPNVGALHSQVHDVAMAFSQMAGGGAAAGAGFGAGVTAAGASSGGKAGTLAGALAAGAAAGAGGTTAGSGSSKGAKSKGGRGAKGSGAGGVGASNNAAAGNAAGGAAGAAAGAGSVGGVGGAGAAGGGNASKRAKGSSSAGAGGGVGGANASAGGAGARGSSKKKPSQVMNFDSEEEDTAKPMSYDEKRQLSLDINKLPGDKLGRVVHIIQNREPSLRDSNPDEIEIDFETLKPSTLRELESYVASCLRKKTHKKPSGKSKDEQMAEKKQELEKRLQDVTGQLGASKKTAKKDESASSKVEAVQPANPVSSSSSSSDSSSSSSSDSSSSDSSDSEAGDGDERPPRKKKSRDSNGSNVNNPSINVVMGGNLPSGALSPTTMLMGLDHVVNSNTPTSQMSNMLGNANPLTAAAMLNNNNKTSLPGSNFGGAPAPGNMMHAGAGVPVAGAAVSASTGQQHNKNGPNDLSKVQPGGPINAALPPHSFAGGTATVATSQSSGGIRIASNLHKPSGLGGGDLGEHHAALAAALTSGINSTGTAGGGINNNGGSNNNANPLGGSHGDAMVNASLASLASGLKQIPQFDDPVEQSLASLEFSAGSTGKSGLTDNFLMQQHLMQPAGPQQQQQQQQQQPFGHQQQQQQQQQQQQQQQQHMDYVTELLSKGAENVGGMNGNHLLNFNLDMAAAYQQKHPQQQQQQAHNNGFNVADFGMAGFDGLNMTAASFLDLEPSLQQQQMQQMQLQQQHHQQQQQQTHQQQQQHQQQHHQQQQQQQLTQQQLQQQQQQQQQQQHLQQQQHQQQHHQAANKLLIIPKPIESMMPSPPDKQQLQQHQKVLPPQQSPSDMKLHPNAAAAAAVASAQAKLVQTFKANEQNLKNASSWSSLASANSPQSHTSSSSSSSKAKPAMDSFQQFRNKAKERDRLKLLEAAEKEKKNQKEAAEKEQQRKHHKSSSSSLTSAAVAQAAAIAAATAAAAVTLGAAAAAALASSASNPSGGSSSGGAGSTSQQAITGDRDRDRDRERERERSGSGGGQSGNGNNSSNSANSNGPGSAGSGGSGGGGGSGPASAGGPNSGGGGTANSNSGGGGGGGGPALLNAGSNSNSGVGSGGAASSNSNSSVGGIVGSGGPGSNSQGSSGGGGGGPASGGGMGSGAIDYGQQVAVLTQVAANAQAQHVAAAVAAQAILAASPLGAMESGRKSVHDAQPQISRVEDIKASPGGQGQSSPAQQSPQDRAAAKRAEQRRAEQERRRREALAGQIDMNMQSDLMAAFEETL.

In terms of domain architecture, Bromo 1 spans 34 to 140 (RNTNQLQYLI…KVFLQKIESM (107 aa)). Residues 145–284 (LELEPVTAKG…TTAMAGGVGG (140 aa)) form a disordered region. 2 stretches are compositionally biased toward low complexity: residues 177-209 (GSGT…SGLQ) and 268-279 (PGSTNTTTTAMA). Residues 330–350 (AAVAAAAAAAAAAAAAAGGAA) traverse the membrane as a helical segment. The interval 396-432 (KGVKRKADTTTPTANAFESPYTQMDSKSAKIATRRES) is disordered. Residues 404 to 421 (TTTPTANAFESPYTQMDS) are compositionally biased toward polar residues. A helical membrane pass occupies residues 451–471 (VSGVPGLGGLVAGGVAGVAVA). Position 452 is a phosphoserine (S452). The Bromo 2 domain maps to 475 to 584 (EKLSDALKSC…DVFEMRYANI (110 aa)). Disordered stretches follow at residues 590 to 655 (ANAA…ERSA) and 677 to 735 (EASA…SVPG). Residues 593–619 (AHHHGHGHGHGHGHGHGHGHGHGHGHG) are compositionally biased toward basic residues. The segment covering 636 to 649 (SSEDSSDTENESNS) has biased composition (acidic residues). The segment covering 681 to 694 (KKKAKKKLKEKKKS) has biased composition (basic residues). Residues 711-735 (TGGGANAGGAGGPGSGGHGSVSVPG) show a composition bias toward gly residues. 3 consecutive transmembrane segments (helical) span residues 750-770 (LNAL…AGGV), 790-810 (MAGG…AAGA), and 816-830 (AGTL…AAAG). Disordered regions lie at residues 832-858 (GGTT…SGAG), 891-956 (AGAA…SYDE), 1016-1139 (CLRK…GGNL), 1217-1260 (AVSA…ATVA), 1384-1416 (QPAG…QQQQ), 1502-1530 (MQQM…QQQH), 1580-1616 (IESM…PNAA), 1645-1728 (WSSL…VAQA), 1745-1918 (AAAA…SGAI), and 1957-2023 (MESG…GQID). Residues 874 to 894 (GAAGAAAGAGSVGGVGGAGAA) form a helical membrane-spanning segment. Over residues 910-927 (GAGGGVGGANASAGGAGA) the composition is skewed to gly residues. The region spanning 942 to 1024 (DSEEEDTAKP…SCLRKKTHKK (83 aa)) is the NET domain. S943 is subject to Phosphoserine. Over residues 1017 to 1027 (LRKKTHKKPSG) the composition is skewed to basic residues. A compositionally biased stretch (basic and acidic residues) spans 1028–1046 (KSKDEQMAEKKQELEKRLQ). Residues 1079–1100 (SSSSSSSDSSSSSSSDSSSSDS) show a composition bias toward low complexity. Polar residues-rich tracts occupy residues 1121-1131 (SNGSNVNNPSI) and 1222-1232 (TGQQHNKNGPN). Residues 1645 to 1665 (WSSLASANSPQSHTSSSSSSS) show a composition bias toward low complexity. S1653 carries the phosphoserine modification. A compositionally biased stretch (basic and acidic residues) spans 1680 to 1708 (KAKERDRLKLLEAAEKEKKNQKEAAEKEQ). 2 stretches are compositionally biased toward low complexity: residues 1716–1728 (SSSS…VAQA) and 1745–1760 (AAAA…PSGG). The chain crosses the membrane as a helical span at residues 1731–1751 (IAAATAAAAVTLGAAAAAALA). Positions 1776-1791 (GDRDRDRDRERERERS) are enriched in basic and acidic residues. Residues 1800 to 1813 (NGNNSSNSANSNGP) are compositionally biased toward low complexity. Composition is skewed to gly residues over residues 1814 to 1828 (GSAG…GGSG) and 1835 to 1856 (PNSG…GGGP). Residues 1857–1884 (ALLNAGSNSNSGVGSGGAASSNSNSSVG) show a composition bias toward low complexity. Residues 1885 to 1915 (GIVGSGGPGSNSQGSSGGGGGGPASGGGMGS) show a composition bias toward gly residues. A helical membrane pass occupies residues 1939-1959 (VAAAVAAQAILAASPLGAMES). A phosphoserine mark is found at S1980 and S1988. Over residues 1986–1997 (QSSPAQQSPQDR) the composition is skewed to low complexity. Basic and acidic residues predominate over residues 1998–2017 (AAAKRAEQRRAEQERRRREA).

The protein localises to the membrane. Its function is as follows. Required maternally for proper expression of other homeotic genes involved in pattern formation, such as Ubx. In Drosophila melanogaster (Fruit fly), this protein is Homeotic protein female sterile (fs(1)h).